A 279-amino-acid polypeptide reads, in one-letter code: tRNA dimethylallyltransferase (279 aa).

10–17 (GPTASGKS) is a binding site for ATP. A substrate-binding site is contributed by 12–17 (TASGKS).

This sequence belongs to the IPP transferase family. Monomer. The cofactor is Mg(2+).

The enzyme catalyses adenosine(37) in tRNA + dimethylallyl diphosphate = N(6)-dimethylallyladenosine(37) in tRNA + diphosphate. Its function is as follows. Catalyzes the transfer of a dimethylallyl group onto the adenine at position 37 in tRNAs that read codons beginning with uridine, leading to the formation of N6-(dimethylallyl)adenosine (i(6)A). The sequence is that of tRNA dimethylallyltransferase from Roseobacter denitrificans (strain ATCC 33942 / OCh 114) (Erythrobacter sp. (strain OCh 114)).